Reading from the N-terminus, the 171-residue chain is NADH-quinone oxidoreductase subunit I (171 aa).

4Fe-4S ferredoxin-type domains lie at R63–D92 and T102–I131. Residues C72, C75, C78, C82, C111, C114, C117, and C121 each contribute to the [4Fe-4S] cluster site.

This sequence belongs to the complex I 23 kDa subunit family. As to quaternary structure, NDH-1 is composed of 14 different subunits. Subunits NuoA, H, J, K, L, M, N constitute the membrane sector of the complex. The cofactor is [4Fe-4S] cluster.

Its subcellular location is the cell inner membrane. The catalysed reaction is a quinone + NADH + 5 H(+)(in) = a quinol + NAD(+) + 4 H(+)(out). Functionally, NDH-1 shuttles electrons from NADH, via FMN and iron-sulfur (Fe-S) centers, to quinones in the respiratory chain. The immediate electron acceptor for the enzyme in this species is believed to be ubiquinone. Couples the redox reaction to proton translocation (for every two electrons transferred, four hydrogen ions are translocated across the cytoplasmic membrane), and thus conserves the redox energy in a proton gradient. The chain is NADH-quinone oxidoreductase subunit I from Paracidovorax citrulli (strain AAC00-1) (Acidovorax citrulli).